The sequence spans 590 residues: MSNPAKSEQSAGHDVKVGKRLMGYLRPELRIFIAAILAMAVVAASEGVIPKVVNDLLDKGFGGEYAGKLWHVPAILTGVALIRGVAQFASGYLLSLISNRVLLKMRMQMFDRMLHAPAHFYHRNTAASLINAVIFEVNQVLSILTSVFITLVRDSLTVVALLIYLFYTNWRLTLIVSVILPVIGYLMSKINRRLRRLNRDHQTLTNSAAYVVEEAAGGYKVVKLHGGEAYEMNRFRNMADRLKNYSMRMAVAGGLNQPVTAFLAALALSVIITIAMIQAQGNQTTIGGFTGFVMAMLLLISPLKHLTDINQPLTRGLTAAELIFRLIDEPVEPQDGGVRLERAKGDLVFERVGFRYGEGTRPALEGIDIRVPAGEVVALVGPSGSGKTTLVNLVPRFFDPTDGRILLDGHAIGDIALRELRNQIAFVSQDVVLFNDTVAANVAYGARSEEEIDMARVERALQAAYLTEVVKNLPEGVNTNIGDNGMKLSGGQRQRLAIARAIYKDAPILILDEATSALDSESERQVQAALEALMVGRTTLVIAHRLSTIENADRIVVLDHGRVAEHGTHEELLAANGLYAGLHRIQFATH.

The next 6 helical transmembrane spans lie at 31–51, 74–94, 132–152, 159–179, 259–279, and 286–306; these read IFIAAILAMAVVAASEGVIPK, AILTGVALIRGVAQFASGYLL, AVIFEVNQVLSILTSVFITLV, VALLIYLFYTNWRLTLIVSVI, VTAFLAALALSVIITIAMIQA, and IGGFTGFVMAMLLLISPLKHL. The ABC transmembrane type-1 domain occupies 33–315; the sequence is IAAILAMAVV…LTDINQPLTR (283 aa). An ABC transporter domain is found at 347 to 585; the sequence is LVFERVGFRY…NGLYAGLHRI (239 aa). Position 381–388 (381–388) interacts with ATP; that stretch reads GPSGSGKT.

The protein belongs to the ABC transporter superfamily. Lipid exporter (TC 3.A.1.106) family. Homodimer.

It is found in the cell inner membrane. The enzyme catalyses ATP + H2O + lipid A-core oligosaccharideSide 1 = ADP + phosphate + lipid A-core oligosaccharideSide 2.. Functionally, involved in lipopolysaccharide (LPS) biosynthesis. Translocates lipid A-core from the inner to the outer leaflet of the inner membrane. Transmembrane domains (TMD) form a pore in the inner membrane and the ATP-binding domain (NBD) is responsible for energy generation. This is ATP-dependent lipid A-core flippase from Cupriavidus pinatubonensis (strain JMP 134 / LMG 1197) (Cupriavidus necator (strain JMP 134)).